The following is a 395-amino-acid chain: Inactive serine protease 54 (395 aa).

An N-terminal signal peptide occupies residues 1-30 (MVSAAGLSGDGKMRGVLLVLLGLLYSSTSC). A Peptidase S1 domain is found at 37-269 (VFYGPDPKEG…YSKWITSKAE (233 aa)). Asn123 carries N-linked (GlcNAc...) asparagine glycosylation. Intrachain disulfides connect Cys164–Cys227, Cys195–Cys205, and Cys217–Cys248. The interval 324–348 (RLGNSSRDSLDVREKDVKESGRSPE) is disordered. N-linked (GlcNAc...) asparagine glycosylation occurs at Asn327. Basic and acidic residues predominate over residues 331–345 (DSLDVREKDVKESGR).

It belongs to the peptidase S1 family. Plasma kallikrein subfamily.

It is found in the secreted. The protein is Inactive serine protease 54 (PRSS54) of Homo sapiens (Human).